The following is a 682-amino-acid chain: Transcription factor 12 (682 aa).

The short motif at 19 to 27 (DLLDFSAMF) is the 9aaTAD element. 3 disordered regions span residues 25-122 (AMFS…LYSR), 140-219 (LGSP…PPTS), and 281-313 (SVSP…ASHT). Polar residues-rich tracts occupy residues 30-48 (PVNS…QFSG) and 56-76 (GTTS…SRGF). Phosphoserine occurs at positions 47, 67, and 79. Over residues 81–93 (HYSDHLNDSRLGA) the composition is skewed to basic and acidic residues. The residue at position 98 (serine 98) is a Phosphoserine. Polar residues-rich tracts occupy residues 101–121 (PFMN…SLYS) and 144–163 (AQLS…SATS). Residue lysine 110 forms a Glycyl lysine isopeptide (Lys-Gly) (interchain with G-Cter in SUMO2) linkage. Serine 116 carries the post-translational modification Phosphoserine. Residues 119 to 140 (LYSRDTGLPGCQSSLLRQDLGL) form a leucine-zipper region. Residue lysine 181 forms a Glycyl lysine isopeptide (Lys-Gly) (interchain with G-Cter in SUMO2) linkage. The segment at 182–196 (KVRKVPPGLPSSVYA) is interaction with RUNX1T1. Over residues 282 to 306 (VSPTDINTSLPPMSSFHRGSTSSSP) the composition is skewed to polar residues. Position 313 is a phosphothreonine (threonine 313). Serine 333 is modified (phosphoserine). Disordered regions lie at residues 349 to 395 (PDHT…SLHS) and 462 to 580 (SASM…ERRM). The span at 352–363 (TSSSFPSNPSTP) shows a compositional bias: low complexity. Polar residues-rich tracts occupy residues 364-376 (VGSP…TSQW) and 383-395 (APSS…SLHS). Positions 481–492 (SVLSSTVTTSST) are enriched in low complexity. Polar residues predominate over residues 506-517 (LQSQSGTVVTTE). Composition is skewed to basic and acidic residues over residues 518 to 530 (IKTE…ENLH) and 536 to 551 (DDMK…DIKV). Residue lysine 519 forms a Glycyl lysine isopeptide (Lys-Gly) (interchain with G-Cter in SUMO2) linkage. A Phosphoserine modification is found at serine 540. Lysine 550 participates in a covalent cross-link: Glycyl lysine isopeptide (Lys-Gly) (interchain with G-Cter in SUMO2). Position 557 is a phosphothreonine (threonine 557). Serine 558 and serine 559 each carry phosphoserine. Residues 568 to 580 (PEQKIEREKERRM) are compositionally biased toward basic and acidic residues. Residues 577 to 630 (ERRMANNARERLRVRDINEAFKELGRMCQLHLKSEKPQTKLLILHQAVAVILSL) enclose the bHLH domain. Residues lysine 609 and lysine 653 each participate in a glycyl lysine isopeptide (Lys-Gly) (interchain with G-Cter in SUMO2) cross-link. The tract at residues 632 to 655 (QQVRERNLNPKAACLKRREEEKVS) is class A specific domain. A disordered region spans residues 651–682 (EEKVSAVSAEPPTTLPGTHPGLSETTNPMGHM). Residues 661–672 (PPTTLPGTHPGL) show a composition bias toward low complexity. Residues 673–682 (SETTNPMGHM) are compositionally biased toward polar residues.

As to quaternary structure, efficient DNA binding requires dimerization with another bHLH protein. Forms homo- or heterooligomers with myogenin, E12 and ITF2 proteins. Interacts with PTF1A. Interacts with NEUROD2. Interacts with RUNX1T1. Interacts with AML1-MTG8/ETO (via nervy homology region 2 in oligomerized form). Interacts with BHLHA9. In terms of tissue distribution, expressed in several tissues and cell types including skeletal muscle, thymus, and a B-cell line.

It is found in the nucleus. In terms of biological role, transcriptional regulator. Involved in the initiation of neuronal differentiation. Activates transcription by binding to the E box (5'-CANNTG-3'). May be involved in the functional network that regulates the development of the GnRH axis. This is Transcription factor 12 (TCF12) from Homo sapiens (Human).